A 168-amino-acid chain; its full sequence is Ribosome maturation factor RimM (168 aa).

The region spanning 93 to 167 is the PRC barrel domain; sequence ENEFYQSDLV…YITLNMPEFI (75 aa).

This sequence belongs to the RimM family. As to quaternary structure, binds ribosomal protein uS19.

It is found in the cytoplasm. Functionally, an accessory protein needed during the final step in the assembly of 30S ribosomal subunit, possibly for assembly of the head region. Essential for efficient processing of 16S rRNA. May be needed both before and after RbfA during the maturation of 16S rRNA. It has affinity for free ribosomal 30S subunits but not for 70S ribosomes. The chain is Ribosome maturation factor RimM from Wolbachia sp. subsp. Brugia malayi (strain TRS).